The following is a 2537-amino-acid chain: MEDFRGIAEESFPSFLTNSLFGNSGILENVTLSSNLGLPVAVSTLARDRSSTDNRYPDIQASYLVEGRFSVPSGSSPGSQSDAEPRERLQLSFQDDDSISRKKSYVESQRLSNALSKQSALQMETAGPEEEPAGATESLQGQDLFNRASPLEQAQDSPIDFHLQSWMNNKEPKIVVLDAGKHFEDKTLKSDLSHTSLLENEKLILPTSLEDSSDDDIDDEMFYDDHLEAYFEQLAIPGMIYEDLEGPEPPEKGFKLPTNGLRQANENGSLNCKFQSENNSSLISLDSHSSETTHKESEESQVICLPGTSNSIGTGDSRRYTDGMLPFSSGTWGTEKEIENLKGIVPDLNSECASKDVLVKTLRAIDVKLNSDNFHDANANRGGFDLTDPVKQGAECPHQNKTVLHMDGCLDTETPTVSIQENVDVASLKPISDSGINFTDAIWSPTCERRTCECHESIEKNKDKTDLPQSVVYQNEEGRWVTDLAYYTSFNSKQNLNVSLSDEMNEDFRSGSEAFDLIAQDEEEFNKEHQFIQEENIDAHNTSVALGDTSWGATINYSLLRKSRSTSDLDKDDASYLRLSLGEFFAQRSEALGCLGGGNNVKRPSFGYFIRSPEKREPIALIRKSDVSRGNLEKEMAHLNHDLYSGDLNEQSQAQLSEGSITLQVEAVESTSQVDENDVTLTADKGKTEDTFFMSNKPQRYKDKLPDSGDSMLRISTIASAIAEASVNTDPSQLAAMIKALSNKTRDKTFQEDEKQKDYSHVRHFLPNDLEKSNGSNALDMEKYLKKTEVSRYESALENFSRASMSDTWDLSLPKEQTTQDIHPVDLSATSVSVRAPEENTAAIVYVENGESENQESFRTINSSNSVTNRENNSAVVDVKTCSIDNKLQDVGNDEKATSISTPSDSYSSVRNPRITSLCLLKDCEEIRDNRENQRQNECVSEISNSEKHVTFENHRIVSPKNSDLKNTSPEHGGRGSEDEQESFRPSTSPLSHSSPSEISGTSSSGCALESFGSAAQQQQPPCEQELSPLVCSPAGVSRLTYVSEPESSYPTTATDDALEDRKSDITSELSTTIIQGSPAALEERAMEKLREKVPFQNRGKGTLSSIIQNNSDTRKATETTSLSSKPEYVKPDFRWSKDPSSKSGNLLETSEVGWTSNPEELDPIRLALLGKSGLSCQVGSATSHPVSCQEPIDEDQRISPKDKSTAGREFSGQVSHQTTSENQCTPIPSSTVHSSVADMQNMPAAVHALLTQPSLSAAPFAQRYLGTLPSTGSTTLPQCHAGNATVCGFSGGLPYPAVAGEPVQNSVAVGICLGSNIGSGWMGTSSLCNPYSNTLNQNLLSTTKPFPVPSVGTNCGIEPWDSGVTSGLGSVRVPEELKLPHACCVGIASQTLLSVLNPTDRWLQVSIGVLSISVNGEKVDLSTYRCLVFKNKAIIRPHATEEIKVLFIPSSPGVFRCTFSVASWPCSTDAETIVQAEALASTVTLTAIAESPVIEVETEKKDVLDFGDLTYGGWKALPLKLINRTHATVPIRLIINANAVAWRCFTFSKESVRAPVEVAPCADVVTRLAGPSVVNHMMPASYDGQDPEFLMIWVLFHSPKKQISSSDILDSAEEFSAKVDIEVDSPNPTPVLRSVSLRARAGIARIHAPRDLQTMHFLAKVASSRKQHLPLKNAGNIEVYLDIKVPEQGSHFSVDPKNLLLKPGEEHEVIVSFTPKDPEACEERILKIFVQPFGPQYEVVLKGEVISSGSKPLSPGPCLDIPSILSNKQFLAWGGVPLGRTQLQKLALRNNSASTTQHLRLLIRGQDQDCFQLQNTFGSEQRLTSNCEIRIHPKEDIFISVLFAPTRLSCMLARLEIKQLGNRSQPGIKFTIPLSGYGGTSNLILEGVKKLSDSYMVTVNGLVPGKESKIVFSVRNTGSRAAFVKAVGFKDSQKKVLLDPKVLRIFPDKFVLKERTQENVTLIYNPSDRGINNKTATELSTVYLFGGDEISRQQYRRALLHKPEMIKQILPEHSVLQNINFVEAFQDELLVTEVYDLPQRPNDVQLFYGSMCKIILSVIGEFRDCISSREFLQPSSKASLESTSDLGASGKHGGNVSLDVLPVKGPQGSPLLSRAARPPLDQLASEEPWTVLPEHLILVAPSPCDMAKTGRFQIVNNSVRLLRFELCWPAHCLTVTPQHGCVAPESKLQILVSPNSSLSTKQSMFPWSGLIYIHCDDGQKKIVKVQIREDLTQVELLTRLTSKPFGILSPVSEPSVSHLVKPMTKPPSTKVEIRNKSITFPTTEPGETSESCLELENHGTTDVKWHLSSLAPPYVKGVDESGDVFRATYAAFRCSPISGLLESHGIQKVSITFLPRGRGDYAQFWDVECHPLKEPHMKHTLRFQLSGQSIEAENEPENACLSTDSLIKIDHLVKPRRQAVSEASARIPEQLDVTARGVYAPEDVYRFRPTSVGESRTLKVNLRNNSFITHSLKFLSPREPFYVKHSKYSLRAQHYINMPVQFKPKSAGKFEALLVIQTDEGKSIAIRLIGEALGKN.

Disordered stretches follow at residues 69-138 (FSVP…ATES) and 288-308 (HSSETTHKESEESQVICLPGT). Residues 70-81 (SVPSGSSPGSQS) are compositionally biased toward low complexity. Polar residues predominate over residues 106 to 122 (VESQRLSNALSKQSALQ). Residues 288–298 (HSSETTHKESE) show a composition bias toward basic and acidic residues. Serine 812 carries the post-translational modification Phosphoserine. 4 disordered regions span residues 950–1021 (VTFE…QQQP), 1043–1064 (VSEPESSYPTTATDDALEDRKS), 1101–1158 (KGTL…WTSN), and 1182–1234 (ATSH…STVH). Over residues 960-970 (PKNSDLKNTSP) the composition is skewed to polar residues. Low complexity predominate over residues 984 to 1005 (FRPSTSPLSHSSPSEISGTSSS). 2 stretches are compositionally biased toward polar residues: residues 1046–1055 (PESSYPTTAT) and 1103–1112 (TLSSIIQNNS). A compositionally biased stretch (basic and acidic residues) spans 1128 to 1141 (EYVKPDFRWSKDPS). Positions 1142-1158 (SKSGNLLETSEVGWTSN) are enriched in polar residues. Basic and acidic residues predominate over residues 1195–1207 (EDQRISPKDKSTA). Positions 1213 to 1234 (GQVSHQTTSENQCTPIPSSTVH) are enriched in polar residues. Phosphoserine is present on residues serine 1755, serine 2098, and serine 2110. The residue at position 2313 (proline 2313) is a Hydroxyproline.

In terms of assembly, interacts with SHBG. Interacts with PLK4; this interaction mediates the formation of a ternary complex composed by PLK4, TENT5C and CEP192. Interacts with CCDC66. In terms of processing, hydroxylation by PHD1/EGLN2 at Pro-2313 promotes ubiquitination. Ubiquitinated by a SCF(SKP2) complex following proline hydroxylation. Post-translationally, ubiquitinated in a FBXL13-dependent manner, leading to proteasomal degradation.

It localises to the cytoplasm. The protein resides in the cytoskeleton. It is found in the microtubule organizing center. Its subcellular location is the centrosome. The protein localises to the centriole. Its function is as follows. Required for mitotic centrosome maturation and bipolar spindle assembly. Appears to be a major regulator of pericentriolar material (PCM) recruitment, centrosome maturation, and centriole duplication. Centrosome-specific activating scaffold for AURKA and PLK1. This Homo sapiens (Human) protein is Centrosomal protein of 192 kDa.